Consider the following 352-residue polypeptide: Holliday junction branch migration complex subunit RuvB (352 aa).

Positions 13–201 (FSLRKKELRL…FGISQKIEFY (189 aa)) are large ATPase domain (RuvB-L). ATP-binding positions include Arg41, Gly82, Lys85, Thr86, Thr87, 148 to 150 (EDF), Arg191, Tyr201, and Arg238. Thr86 provides a ligand contact to Mg(2+). Residues 202-273 (TCDELKQIID…LIKKALNSYQ (72 aa)) form a small ATPAse domain (RuvB-S) region. The head domain (RuvB-H) stretch occupies residues 276–352 (EKGLDYVDRQ…KYIDSKNDNF (77 aa)). 2 residues coordinate DNA: Arg330 and Arg335.

This sequence belongs to the RuvB family. Homohexamer. Forms an RuvA(8)-RuvB(12)-Holliday junction (HJ) complex. HJ DNA is sandwiched between 2 RuvA tetramers; dsDNA enters through RuvA and exits via RuvB. An RuvB hexamer assembles on each DNA strand where it exits the tetramer. Each RuvB hexamer is contacted by two RuvA subunits (via domain III) on 2 adjacent RuvB subunits; this complex drives branch migration. In the full resolvosome a probable DNA-RuvA(4)-RuvB(12)-RuvC(2) complex forms which resolves the HJ.

The protein resides in the cytoplasm. It catalyses the reaction ATP + H2O = ADP + phosphate + H(+). In terms of biological role, the RuvA-RuvB-RuvC complex processes Holliday junction (HJ) DNA during genetic recombination and DNA repair, while the RuvA-RuvB complex plays an important role in the rescue of blocked DNA replication forks via replication fork reversal (RFR). RuvA specifically binds to HJ cruciform DNA, conferring on it an open structure. The RuvB hexamer acts as an ATP-dependent pump, pulling dsDNA into and through the RuvAB complex. RuvB forms 2 homohexamers on either side of HJ DNA bound by 1 or 2 RuvA tetramers; 4 subunits per hexamer contact DNA at a time. Coordinated motions by a converter formed by DNA-disengaged RuvB subunits stimulates ATP hydrolysis and nucleotide exchange. Immobilization of the converter enables RuvB to convert the ATP-contained energy into a lever motion, pulling 2 nucleotides of DNA out of the RuvA tetramer per ATP hydrolyzed, thus driving DNA branch migration. The RuvB motors rotate together with the DNA substrate, which together with the progressing nucleotide cycle form the mechanistic basis for DNA recombination by continuous HJ branch migration. Branch migration allows RuvC to scan DNA until it finds its consensus sequence, where it cleaves and resolves cruciform DNA. The polypeptide is Holliday junction branch migration complex subunit RuvB (Prochlorococcus marinus (strain MIT 9312)).